We begin with the raw amino-acid sequence, 711 residues long: Ribosomal RNA large subunit methyltransferase K/L (711 aa).

Positions 42–153 (DAQRAVLWSR…KGRATISVDL (112 aa)) constitute a THUMP domain.

The protein belongs to the methyltransferase superfamily. RlmKL family.

It localises to the cytoplasm. The enzyme catalyses guanosine(2445) in 23S rRNA + S-adenosyl-L-methionine = N(2)-methylguanosine(2445) in 23S rRNA + S-adenosyl-L-homocysteine + H(+). It catalyses the reaction guanosine(2069) in 23S rRNA + S-adenosyl-L-methionine = N(2)-methylguanosine(2069) in 23S rRNA + S-adenosyl-L-homocysteine + H(+). Specifically methylates the guanine in position 2445 (m2G2445) and the guanine in position 2069 (m7G2069) of 23S rRNA. The polypeptide is Ribosomal RNA large subunit methyltransferase K/L (Xanthomonas oryzae pv. oryzae (strain KACC10331 / KXO85)).